The chain runs to 486 residues: MSHTLKSKTLQELDIEEIKETNPLLKLVQGQRIVQVPELVLESGVVINNFPIAYKTWGTLNEAGDNVLVICHALTGSADVADWWGPLLGNDLAFDPSRFFIICLNSMGSPYGSFSPLTINEETGVRYGPEFPLCTVRDDVRAHRIVLDSLGVKSIACVIGGSMGGMLSLEWAAMYGKEYVKNMVALATSARHSAWCISWSEAQRQSIYSDPNYLDGYYPVEEQPVAGLSAARMSALLTYRTRNSFENKFSRRSPSIAQQQKAQREETRKPSTVSEHSLQIHNDGYKTKASTAIAGISGQKGQSVVSTASSSDSLNSSTSMTSVSSVTGEVKDIKPAQTYFSAQSYLRYQGTKFINRFDANCYIAITRKLDTHDLARDRVDDITEVLSTIQQPSLIIGIQSDGLFTYSEQEFLAEHIPKSQLEKIESPEGHDAFLLEFKLINKLIVQFLKTNCKAITDAAPRAWGGDVGNDETKTSVFGEAEEVTNW.

The 371-residue stretch at 66 to 436 (NVLVICHALT…PEGHDAFLLE (371 aa)) folds into the AB hydrolase-1 domain. Residue Ser162 is the Nucleophile of the active site. A disordered region spans residues 248 to 281 (KFSRRSPSIAQQQKAQREETRKPSTVSEHSLQIH). 2 stretches are compositionally biased toward polar residues: residues 250-261 (SRRSPSIAQQQK) and 270-280 (PSTVSEHSLQI). Active-site residues include Asp401 and His430.

It belongs to the AB hydrolase superfamily. MetX family.

It is found in the cytoplasm. It carries out the reaction L-homoserine + acetyl-CoA = O-acetyl-L-homoserine + CoA. It participates in amino-acid biosynthesis; L-methionine biosynthesis via de novo pathway; O-acetyl-L-homoserine from L-homoserine: step 1/1. Functionally, commits homoserine to the methionine biosynthesis pathway by catalyzing its O-acetylation. The protein is Homoserine O-acetyltransferase (MET2) of Saccharomyces cerevisiae (strain ATCC 204508 / S288c) (Baker's yeast).